Reading from the N-terminus, the 1170-residue chain is PLQLVLVFSQGILNCCVAYNVGLPKAKIFSGPSSEQFGYAVQQFINPKGNWLLVGSPWSGFPKNRMGDVYKCPVDLSTTTCEKLNLQTSTSMSNVTEMKTNMSLGLTLTRNVGTGGFLTCGPLWAQQCGSQYYTTGVCSDVSPDFQLRTSFAPAVQTCPSFIDVVVVCDESNSIYPWDAVKNFLEKFVQGLDIGPTKTQMGLIQYANNPRVVFNLNTFKSKDEMIKATSQTFQYGGDLTNTFKAIQYARDTAYSTAAGGRPGATKVMVVVTDGESHDGSKLKAVIDQCNKDNILRFGIAVLGYLNRNALDTKNLIKEIKAIASIPTERHFFNVSDEADLLEKAGTIGEQIFSIEGTVQGGDNFQMEMSQVGFSAEYSPQNNILMLGAVGAYDWSGTVVQKTPHGHLIFSKQAFEQILQDRNHSSYLGYSVASISTGNSVHFVAGAPRANYTGQIVLYSVNENGNVTVIQSQRGDQIGSYFGSVLCAVDVNKDTITDVLLVGAPMYMNDLKKEEGRVYLFTITKGILNWHQFLEGPNGLENARFGSAIAALSDINMDGFNDVIVGSPLENQNSGAVYIYNGHEGMIRLRYSQKILGSDRAFSSHLQYFGRSLDGYGDLNGDSITDVSVGAFGQVVQLWSQSIADVSVDASFTPKKITLLNKNAEIKLKLCFSAKFRPTNQNNQVAIVYNITIDEDQFSSRVISRGLFKENNERCLQKTMIVSQAQRCSEYIIHIQEPSDIISPLNLCMNISLENPGTNPALEAYSETVKVFSIPFHKDCGDDGVCISDLVLNVQQLPATQQQPFIVSNQNKRLTFSVQLKNKKESAYNTEIVVDFSENLFFASWSMPVDGTEVTCQIASSQKSVTCNVGYPALKSKQQVTFTINFDFNLQNLQNQASISFRALSESQEENMADNSVNLKLSLLYDAEIHITRSTNINFYEVSLDGNVSSVVHSFEDIGPKFIFSIKVTTGSVPVSMASVIIHIPQYTKDKNPLMYLTGVHTDQAGDISCEAEINPLKIGQTSSSVSFKSENFRHIKELNCRTASCSNIMCWLRDLQVKGEYFLNVSTRIWNGTFAASTFQTVQLTAAAEIDTYNPQIYVIEENTVTIPLTIMKPHEKVEVPTGVIVGSVIAGILLLLALVAILWKLGFFKRKYEKMAKNPDETDETTELNS.

Positions 1 to 18 (PLQLVLVFSQGILNCCVA) are cleaved as a signal peptide. At 19-1121 (YNVGLPKAKI…KPHEKVEVPT (1103 aa)) the chain is on the extracellular side. FG-GAP repeat units lie at residues 23–81 (LPKA…TTTC) and 90–150 (TSMS…LRTS). An intrachain disulfide couples Cys72 to Cys81. N-linked (GlcNAc...) asparagine glycans are attached at residues Asn94, Asn101, and Asn332. A VWFA domain is found at 177-354 (WDAVKNFLEK…TIGEQIFSIE (178 aa)). FG-GAP repeat units lie at residues 355–409 (GTVQ…LIFS), 412–464 (AFEQ…ENGN), 466–528 (TVIQ…ILNW), 529–587 (HQFL…MIRL), and 591–653 (QKIL…FTPK). Residues Asn421, Asn449, and Asn464 are each glycosylated (N-linked (GlcNAc...) asparagine). Positions 472-474 (RGD) match the Cell attachment site motif. Positions 488, 490, 492, 496, 552, 554, 556, 560, 616, 618, 620, and 624 each coordinate Ca(2+). Cys669 and Cys726 form a disulfide bridge. Residues Asn688 and Asn748 are each glycosylated (N-linked (GlcNAc...) asparagine). Disulfide bonds link Cys778/Cys784 and Cys854/Cys865. A glycan (N-linked (GlcNAc...) asparagine) is linked at Asn945. 2 cysteine pairs are disulfide-bonded: Cys1008-Cys1039 and Cys1044-Cys1049. 2 N-linked (GlcNAc...) asparagine glycosylation sites follow: Asn1063 and Asn1070. The chain crosses the membrane as a helical span at residues 1122–1143 (GVIVGSVIAGILLLLALVAILW). Residues 1144–1170 (KLGFFKRKYEKMAKNPDETDETTELNS) lie on the Cytoplasmic side of the membrane. Residues 1146–1150 (GFFKR) carry the GFFKR motif motif.

This sequence belongs to the integrin alpha chain family. Heterodimer of an alpha and a beta subunit. Alpha-2 associates with beta-1. Interacts with HPS5 and RAB21.

It localises to the membrane. In terms of biological role, integrin alpha-2/beta-1 is a receptor for laminin, collagen, collagen C-propeptides, fibronectin and E-cadherin. It recognizes the proline-hydroxylated sequence G-F-P-G-E-R in collagen. It is responsible for adhesion of platelets and other cells to collagens, modulation of collagen and collagenase gene expression, force generation and organization of newly synthesized extracellular matrix. In Bos taurus (Bovine), this protein is Integrin alpha-2 (ITGA2).